We begin with the raw amino-acid sequence, 199 residues long: ATP-dependent Clp protease proteolytic subunit 3 (199 aa).

The active-site Nucleophile is the Ser101. His126 is an active-site residue.

This sequence belongs to the peptidase S14 family. As to quaternary structure, fourteen ClpP subunits assemble into 2 heptameric rings which stack back to back to give a disk-like structure with a central cavity, resembling the structure of eukaryotic proteasomes.

It localises to the cytoplasm. It carries out the reaction Hydrolysis of proteins to small peptides in the presence of ATP and magnesium. alpha-casein is the usual test substrate. In the absence of ATP, only oligopeptides shorter than five residues are hydrolyzed (such as succinyl-Leu-Tyr-|-NHMec, and Leu-Tyr-Leu-|-Tyr-Trp, in which cleavage of the -Tyr-|-Leu- and -Tyr-|-Trp bonds also occurs).. Functionally, cleaves peptides in various proteins in a process that requires ATP hydrolysis. Has a chymotrypsin-like activity. Plays a major role in the degradation of misfolded proteins. In Synechococcus elongatus (strain ATCC 33912 / PCC 7942 / FACHB-805) (Anacystis nidulans R2), this protein is ATP-dependent Clp protease proteolytic subunit 3.